The sequence spans 512 residues: Glucose-1-phosphate adenylyltransferase small subunit 2, chloroplastic (512 aa).

Residues 1–21 (MAAIGVLKVPPSSSSSSSSSS) are disordered. The N-terminal 63 residues, 1 to 63 (MAAIGVLKVP…RNPFIVSPKA (63 aa)), are a transit peptide targeting the chloroplast. Over residues 12–21 (SSSSSSSSSS) the composition is skewed to low complexity.

The protein belongs to the bacterial/plant glucose-1-phosphate adenylyltransferase family. Heterotetramer. In terms of tissue distribution, leaves and seeds.

It localises to the plastid. The protein resides in the chloroplast. The catalysed reaction is alpha-D-glucose 1-phosphate + ATP + H(+) = ADP-alpha-D-glucose + diphosphate. The protein operates within glycan biosynthesis; starch biosynthesis. Its activity is regulated as follows. Activated by 3'phosphoglycerate, inhibited by orthophosphate. Allosteric regulation. Its function is as follows. This protein plays a role in synthesis of starch. It catalyzes the synthesis of the activated glycosyl donor, ADP-glucose from Glc-1-P and ATP. The chain is Glucose-1-phosphate adenylyltransferase small subunit 2, chloroplastic (AGPP) from Vicia faba (Broad bean).